We begin with the raw amino-acid sequence, 596 residues long: Probable lysosomal cobalamin transporter (596 aa).

10 helical membrane-spanning segments follow: residues 13–33, 45–65, 99–119, 150–170, 201–221, 318–338, 353–373, 381–401, 425–445, and 512–532; these read IWVA…ITTF, VSIV…LLPV, VVYY…IPFA, LGFV…PAAG, LLIT…LALL, LLGG…MLIT, GYIL…VQSA, ILMA…IATI, IATV…AMIV, and VFGA…MVVF. An N-linked (GlcNAc...) asparagine glycan is attached at Asn-543. The disordered stretch occupies residues 576 to 596; that stretch reads GRAKNRNGYGTGGGEGSNGRG. Residues 584–596 show a composition bias toward gly residues; it reads YGTGGGEGSNGRG.

This sequence belongs to the LIMR family. LMBRD1 subfamily.

It localises to the lysosome membrane. Its function is as follows. Probable lysosomal cobalamin transporter. Required to export cobalamin from lysosomes allowing its conversion to cofactors. This chain is Probable lysosomal cobalamin transporter, found in Podospora anserina (strain S / ATCC MYA-4624 / DSM 980 / FGSC 10383) (Pleurage anserina).